The chain runs to 944 residues: DNA ligase 4 (944 aa).

ATP contacts are provided by Glu-280, Lys-282, Arg-287, Glu-340, Phe-382, Glu-442, Lys-447, Lys-464, and Lys-466. The active-site N6-AMP-lysine intermediate is Lys-282. Glu-340 serves as a coordination point for Mg(2+). Residue Glu-442 participates in Mg(2+) binding. BRCT domains follow at residues 681-780 and 836-941; these read PISN…PNYC and FPLF…DFPV.

Belongs to the ATP-dependent DNA ligase family. Component of the DNA ligase IV complex, composed of DNL4, LIF1 and NEJ1. Interacts (via BRCT domain) with LIF1. Interacts with NEJ1. Interacts with POL4 in the DNL4-LIF1 complex. Mg(2+) is required as a cofactor.

The protein localises to the nucleus. The enzyme catalyses ATP + (deoxyribonucleotide)n-3'-hydroxyl + 5'-phospho-(deoxyribonucleotide)m = (deoxyribonucleotide)n+m + AMP + diphosphate.. Functionally, DNA ligase involved in DNA non-homologous end joining (NHEJ); required for double-strand break (DSB) repair. The polypeptide is DNA ligase 4 (DNL4) (Saccharomyces cerevisiae (strain ATCC 204508 / S288c) (Baker's yeast)).